A 255-amino-acid polypeptide reads, in one-letter code: ATP synthase subunit a (255 aa).

6 helical membrane-spanning segments follow: residues 40 to 60, 109 to 129, 135 to 155, 163 to 183, 196 to 218, and 230 to 250; these read TEPIFMSLLIMVLFVLLASEV, LIGGSAAFIFFSNASALIPGV, NLNITIGCAVVVFVLFNYYGL, VAHLAGPKWYLAPLIFPIEVI, LMLNIGVDHLVASIFLGLVALFV, and IVVQTLVFCLLSCIYIGLATE.

This sequence belongs to the ATPase A chain family. In terms of assembly, F-type ATPases have 2 components, CF(1) - the catalytic core - and CF(0) - the membrane proton channel. CF(1) has five subunits: alpha(3), beta(3), gamma(1), delta(1), epsilon(1). CF(0) has three main subunits: a(1), b(2) and c(9-12). The alpha and beta chains form an alternating ring which encloses part of the gamma chain. CF(1) is attached to CF(0) by a central stalk formed by the gamma and epsilon chains, while a peripheral stalk is formed by the delta and b chains.

Its subcellular location is the cell inner membrane. Functionally, key component of the proton channel; it plays a direct role in the translocation of protons across the membrane. This is ATP synthase subunit a from Sorangium cellulosum (strain So ce56) (Polyangium cellulosum (strain So ce56)).